Consider the following 336-residue polypeptide: Glycerol-3-phosphate dehydrogenase [NAD(P)+] (336 aa).

NADPH-binding residues include serine 11, tryptophan 12, arginine 32, arginine 33, and lysine 110. 2 residues coordinate sn-glycerol 3-phosphate: lysine 110 and glycine 140. Position 144 (alanine 144) interacts with NADPH. The sn-glycerol 3-phosphate site is built by lysine 195, aspartate 248, serine 258, arginine 259, and asparagine 260. Residue lysine 195 is the Proton acceptor of the active site. Arginine 259 contacts NADPH. Residues valine 284 and glutamate 286 each contribute to the NADPH site.

Belongs to the NAD-dependent glycerol-3-phosphate dehydrogenase family.

Its subcellular location is the cytoplasm. The catalysed reaction is sn-glycerol 3-phosphate + NAD(+) = dihydroxyacetone phosphate + NADH + H(+). The enzyme catalyses sn-glycerol 3-phosphate + NADP(+) = dihydroxyacetone phosphate + NADPH + H(+). The protein operates within membrane lipid metabolism; glycerophospholipid metabolism. Catalyzes the reduction of the glycolytic intermediate dihydroxyacetone phosphate (DHAP) to sn-glycerol 3-phosphate (G3P), the key precursor for phospholipid synthesis. In Nocardia farcinica (strain IFM 10152), this protein is Glycerol-3-phosphate dehydrogenase [NAD(P)+].